A 168-amino-acid polypeptide reads, in one-letter code: Segregation and condensation protein B (168 aa).

Belongs to the ScpB family. Homodimer. Homodimerization may be required to stabilize the binding of ScpA to the Smc head domains. Component of a cohesin-like complex composed of ScpA, ScpB and the Smc homodimer, in which ScpA and ScpB bind to the head domain of Smc. The presence of the three proteins is required for the association of the complex with DNA.

It localises to the cytoplasm. Functionally, participates in chromosomal partition during cell division. May act via the formation of a condensin-like complex containing Smc and ScpA that pull DNA away from mid-cell into both cell halves. This chain is Segregation and condensation protein B, found in Caldanaerobacter subterraneus subsp. tengcongensis (strain DSM 15242 / JCM 11007 / NBRC 100824 / MB4) (Thermoanaerobacter tengcongensis).